The sequence spans 683 residues: uncharacterized protein (683 aa).

A run of 14 helical transmembrane segments spans residues 12–32 (LLLY…MMGL), 41–61 (LWLG…IGLI), 84–104 (MAIA…GILF), 110–130 (GLAY…LLAP), 162–182 (IAVL…IQGV), 194–214 (FAVG…LGGM), 221–241 (QVAQ…MIAW), 377–397 (LNFV…PHIL), 413–433 (VAWA…LAAL), 495–515 (IAGL…AAAL), 548–568 (VTTA…VTSL), 573–593 (ILFL…PVLV), 603–623 (AAGA…YIIV), and 645–665 (IASG…VSLL).

Belongs to the sodium:solute symporter (SSF) (TC 2.A.21) family.

It is found in the cell membrane. This is an uncharacterized protein from Cupriavidus necator (strain ATCC 17699 / DSM 428 / KCTC 22496 / NCIMB 10442 / H16 / Stanier 337) (Ralstonia eutropha).